The primary structure comprises 312 residues: Olfactory receptor 14C36 (312 aa).

Residues 1 to 23 lie on the Extracellular side of the membrane; sequence MPNSTTVMEFLLMRFSDVWTLQI. N3 is a glycosylation site (N-linked (GlcNAc...) asparagine). Residues 24–44 form a helical membrane-spanning segment; the sequence is LHSASFFMLYLVTLMGNILIV. Residues 45–52 are Cytoplasmic-facing; that stretch reads TVTTCDSS. The chain crosses the membrane as a helical span at residues 53–73; the sequence is LHMPMYFFLRNLSILDACYIS. Over 74-97 the chain is Extracellular; the sequence is VTVPTSCVNSLLDSTTISKAGCVA. Residues C95 and C187 are joined by a disulfide bond. A helical membrane pass occupies residues 98-118; that stretch reads QVFLVVFFVYVELLFLTIMAH. The Cytoplasmic segment spans residues 119-137; the sequence is DRYVAVCQPLHYPVIVNSR. Residues 138 to 158 form a helical membrane-spanning segment; it reads ICIQMTLASLLSGLVYAGMHT. The Extracellular portion of the chain corresponds to 159 to 194; sequence GSTFQLPFCRSNVIHQFFCDIPSLLKLSCSDTFSNE. Residues 195 to 215 traverse the membrane as a helical segment; that stretch reads VMIVVSALGVGGGCFIFIIRS. Over 216 to 235 the chain is Cytoplasmic; that stretch reads YIHIFSTVLGFPRGADRTKA. Residues 236–256 form a helical membrane-spanning segment; that stretch reads FSTCIPHILVVSVFLSSCSSV. At 257-269 the chain is on the extracellular side; sequence YLRPPAIPAATQD. A helical transmembrane segment spans residues 270-290; sequence LILSGFYSIMPPLFNPIIYSL. Over 291–312 the chain is Cytoplasmic; it reads RNKQIKVAIKKIMKRIFYSENV.

This sequence belongs to the G-protein coupled receptor 1 family.

The protein localises to the cell membrane. Functionally, odorant receptor. The chain is Olfactory receptor 14C36 (OR14C36) from Homo sapiens (Human).